Consider the following 459-residue polypeptide: Limonoid 7-O-acetyltransferse (459 aa).

Active-site proton acceptor residues include His-167 and Asp-391.

It belongs to the plant acyltransferase family. Monomer. Expressed in maturing fruits and in juice vesicles.

The catalysed reaction is (1S)-1-acetoxy-luvungin A + acetyl-CoA = (1S)-1,7-diacetoxy-luvungin A + CoA. The protein operates within secondary metabolite biosynthesis; terpenoid biosynthesis. In terms of biological role, acetyltransferase involved in the biosynthesis of limonoids triterpene natural products such as limonin, a compound with insecticidal activity responsible for the bitter taste in citrus. Catalyzes the formation of (1S)-1,7-diacetoxy-luvungin A from (1S)-1-acetoxy-luvungin A. The polypeptide is Limonoid 7-O-acetyltransferse (Citrus sinensis (Sweet orange)).